The following is a 293-amino-acid chain: Bifunctional protein FolD (293 aa).

NADP(+) is bound by residues G164–S166, S193, and T234.

It belongs to the tetrahydrofolate dehydrogenase/cyclohydrolase family. In terms of assembly, homodimer.

It carries out the reaction (6R)-5,10-methylene-5,6,7,8-tetrahydrofolate + NADP(+) = (6R)-5,10-methenyltetrahydrofolate + NADPH. The enzyme catalyses (6R)-5,10-methenyltetrahydrofolate + H2O = (6R)-10-formyltetrahydrofolate + H(+). Its pathway is one-carbon metabolism; tetrahydrofolate interconversion. Catalyzes the oxidation of 5,10-methylenetetrahydrofolate to 5,10-methenyltetrahydrofolate and then the hydrolysis of 5,10-methenyltetrahydrofolate to 10-formyltetrahydrofolate. In Bacteroides fragilis (strain ATCC 25285 / DSM 2151 / CCUG 4856 / JCM 11019 / LMG 10263 / NCTC 9343 / Onslow / VPI 2553 / EN-2), this protein is Bifunctional protein FolD.